The sequence spans 164 residues: Nucleotide-binding protein Acid345_2028 (164 aa).

The protein belongs to the YajQ family.

Nucleotide-binding protein. This Koribacter versatilis (strain Ellin345) protein is Nucleotide-binding protein Acid345_2028.